The sequence spans 356 residues: Tyrosine recombinase XerS (356 aa).

The Core-binding (CB) domain occupies 16–121; sequence IMPWYVLDYY…ALSSLYKYLT (106 aa). The region spanning 169 to 354 is the Tyr recombinase domain; that stretch reads AFLDYVDKEY…VNDEQKNALD (186 aa). Catalysis depends on residues R210, K234, H306, R309, and H332. Y341 acts as the O-(3'-phospho-DNA)-tyrosine intermediate in catalysis.

Belongs to the 'phage' integrase family. XerS subfamily.

The protein resides in the cytoplasm. Its activity is regulated as follows. FtsK is required for recombination. Site-specific tyrosine recombinase, which acts by catalyzing the cutting and rejoining of the recombining DNA molecules. Essential to convert dimers of the bacterial chromosome into monomers to permit their segregation at cell division. The protein is Tyrosine recombinase XerS of Streptococcus pyogenes serotype M5 (strain Manfredo).